The following is a 56-amino-acid chain: uncharacterized protein (56 aa).

This is an uncharacterized protein from Borreliella burgdorferi (strain ATCC 35210 / DSM 4680 / CIP 102532 / B31) (Borrelia burgdorferi).